A 95-amino-acid polypeptide reads, in one-letter code: Heteroscorpine-1 (95 aa).

The first 19 residues, 1–19 (MNSKLTALIFLGLVAIASC), serve as a signal peptide directing secretion. The BetaSPN-type CS-alpha/beta domain occupies 55-95 (EFQCVANIDTMGNCETHCQKTSGEKGFCHGTKCKCGKPLSY). Intrachain disulfides connect C58–C82, C68–C87, and C72–C89.

Belongs to the long chain scorpion toxin family. Class 3 subfamily. Post-translationally, contains 3 disulfide bonds. Expressed by the venom gland.

The protein localises to the secreted. Has antibacterial activity against B.subtilis, K.pneumoniae and P.aeruginosa. This chain is Heteroscorpine-1, found in Heterometrus laoticus (Thai giant scorpion).